The sequence spans 407 residues: Frizzled/smoothened-like sans CRD protein J (407 aa).

The signal sequence occupies residues 1–23; that stretch reads MKFLFSVILVIISFLGISKIVNG. Topologically, residues 24-89 are extracellular; it reads QIACPSPFLY…WNSFNKLVKQ (66 aa). N-linked (GlcNAc...) asparagine glycosylation occurs at Asn-37. The helical transmembrane segment at 90-110 threads the bilayer; sequence MGAVAFTCSAIIMIIYGPLMN. Residues 111–120 lie on the Cytoplasmic side of the membrane; sequence RSFFKFDRHT. The helical transmembrane segment at 121-141 threads the bilayer; the sequence is ITVFCFALSTFFIGVSDLMFA. Residues 142-169 lie on the Extracellular side of the membrane; it reads TNDVDMVCPESHRYARQTDKTCATNGVL. A helical membrane pass occupies residues 170–190; the sequence is FQFGWLGSVMWFAFLSIDGFF. The Cytoplasmic portion of the chain corresponds to 191–199; it reads RASGKKMNK. Residues 200-220 traverse the membrane as a helical segment; the sequence is IAFAIVLASIWILNIVLSFAP. The Extracellular portion of the chain corresponds to 221–246; sequence MGGDQYGAYFVGQVNCWILVKNWQYA. A helical transmembrane segment spans residues 247–267; it reads FFWAELIVSLAIGFVGICLTI. Over 268–285 the chain is Cytoplasmic; that stretch reads YSLIRKTSDGNTLKHVTP. A helical membrane pass occupies residues 286–306; sequence LILVFLLFCQYLYMIIFYGII. Residues 307 to 354 lie on the Extracellular side of the membrane; sequence NEKKDHYQNILAEQVGCIFNNALAKMKVPGIVYAGECTFNETITFSSQ. Asn-346 is a glycosylation site (N-linked (GlcNAc...) asparagine). A helical transmembrane segment spans residues 355–375; that stretch reads YAFLFFVRLLGIEIFAFYLFS. Residues 376–407 are Cytoplasmic-facing; it reads KETLLLIKSSYIATMFGLGDKDAYDVELEETD.

This sequence belongs to the G-protein coupled receptor Fz/Smo family.

It is found in the membrane. This is Frizzled/smoothened-like sans CRD protein J (fscJ) from Dictyostelium discoideum (Social amoeba).